Consider the following 186-residue polypeptide: Ribosome-recycling factor (186 aa).

Positions 140-163 (LKKAEKDGDIGQDEGRSLSERVQK) are disordered.

The protein belongs to the RRF family.

It is found in the cytoplasm. In terms of biological role, responsible for the release of ribosomes from messenger RNA at the termination of protein biosynthesis. May increase the efficiency of translation by recycling ribosomes from one round of translation to another. This is Ribosome-recycling factor from Rhizobium rhizogenes (strain K84 / ATCC BAA-868) (Agrobacterium radiobacter).